Reading from the N-terminus, the 424-residue chain is Ribulose bisphosphate carboxylase (424 aa).

Lysine 159 functions as the Proton acceptor in the catalytic mechanism. Substrate is bound at residue lysine 161. Lysine 185, aspartate 187, and glutamate 188 together coordinate Mg(2+). Lysine 185 carries the N6-carboxylysine modification. Catalysis depends on histidine 277, which acts as the Proton acceptor. Residues arginine 278, histidine 310, 347-349 (SGG), and 369-372 (QAGG) contribute to the substrate site.

This sequence belongs to the RuBisCO large chain family. Type III subfamily. Homodimer or homodecamer. In contrast to form I RuBisCO, the form III RuBisCO is composed solely of large subunits. Requires Mg(2+) as cofactor.

The catalysed reaction is 2 (2R)-3-phosphoglycerate + 2 H(+) = D-ribulose 1,5-bisphosphate + CO2 + H2O. It catalyses the reaction D-ribulose 1,5-bisphosphate + O2 = 2-phosphoglycolate + (2R)-3-phosphoglycerate + 2 H(+). Functionally, catalyzes the addition of molecular CO(2) and H(2)O to ribulose 1,5-bisphosphate (RuBP), generating two molecules of 3-phosphoglycerate (3-PGA). Functions in an archaeal AMP degradation pathway, together with AMP phosphorylase and R15P isomerase. This chain is Ribulose bisphosphate carboxylase, found in Pyrococcus abyssi (strain GE5 / Orsay).